The primary structure comprises 433 residues: Aspartate--tRNA(Asp/Asn) ligase (433 aa).

Glutamate 167 is a binding site for L-aspartate. The aspartate stretch occupies residues 189 to 192 (QLFK). Position 211 (arginine 211) interacts with L-aspartate. ATP contacts are provided by residues 211 to 213 (RAE), 219 to 221 (RHL), and glutamate 356. Residues glutamate 356 and serine 359 each coordinate Mg(2+). Serine 359 and arginine 363 together coordinate L-aspartate. 404–407 (GGER) serves as a coordination point for ATP.

This sequence belongs to the class-II aminoacyl-tRNA synthetase family. Type 2 subfamily. In terms of assembly, homodimer. Requires Mg(2+) as cofactor.

The protein localises to the cytoplasm. The enzyme catalyses tRNA(Asx) + L-aspartate + ATP = L-aspartyl-tRNA(Asx) + AMP + diphosphate. Functionally, aspartyl-tRNA synthetase with relaxed tRNA specificity since it is able to aspartylate not only its cognate tRNA(Asp) but also tRNA(Asn). Reaction proceeds in two steps: L-aspartate is first activated by ATP to form Asp-AMP and then transferred to the acceptor end of tRNA(Asp/Asn). The sequence is that of Aspartate--tRNA(Asp/Asn) ligase from Haloferax volcanii (Halobacterium volcanii).